The following is a 180-amino-acid chain: Uterocalin (180 aa).

An N-terminal signal peptide occupies residues 1–18 (MNLLLLAMGLILPRRPHA). An intrachain disulfide couples Cys82 to Cys175. N-linked (GlcNAc...) asparagine glycosylation is present at Asn101.

This sequence belongs to the calycin superfamily. Lipocalin family. Expressed in glandular and lumenal epithelia of the endometrium. Is transferred to the embryonic capsule, the conceptus and the yolk sac.

It is found in the secreted. Its function is as follows. Binds fatty acids and retinol. Is specialized for the preattachment embryo. May be important to maintain the pregnancy and may transport small hydrophobic ligands from mother to the developing embryo. This chain is Uterocalin, found in Equus caballus (Horse).